A 146-amino-acid chain; its full sequence is Ribonuclease H (146 aa).

The 143-residue stretch at 1 to 143 (MKEIIIYTDG…CDQLARNAIK (143 aa)) folds into the RNase H type-1 domain. The Mg(2+) site is built by Asp-9, Glu-47, Asp-70, and Asp-135.

This sequence belongs to the RNase H family. In terms of assembly, monomer. It depends on Mg(2+) as a cofactor.

The protein resides in the cytoplasm. The catalysed reaction is Endonucleolytic cleavage to 5'-phosphomonoester.. Endonuclease that specifically degrades the RNA of RNA-DNA hybrids. The polypeptide is Ribonuclease H (Syntrophomonas wolfei subsp. wolfei (strain DSM 2245B / Goettingen)).